Reading from the N-terminus, the 64-residue chain is Large ribosomal subunit protein uL29 (64 aa).

It belongs to the universal ribosomal protein uL29 family.

This is Large ribosomal subunit protein uL29 from Maridesulfovibrio salexigens (strain ATCC 14822 / DSM 2638 / NCIMB 8403 / VKM B-1763) (Desulfovibrio salexigens).